Reading from the N-terminus, the 1148-residue chain is Phospholipid-transporting ATPase IB (1148 aa).

Residues 1 to 54 (MSRATSVGDQLDVPARTIYLNQPHLNKFCDNQISTAKYSVVTFLPRFLYEQIRR) are Cytoplasmic-facing. Phosphothreonine is present on Thr5. The chain crosses the membrane as a helical span at residues 55–75 (AANAFFLFIALLQQIPDVSPT). Residues 76–79 (GRYT) lie on the Exoplasmic loop side of the membrane. The helical transmembrane segment at 80 to 100 (TLVPLIIILTIAGIKEIVEDF) threads the bilayer. The Cytoplasmic portion of the chain corresponds to 101-276 (KRHKADNAVN…SNVEKVTNVQ (176 aa)). Residues 277–297 (ILVLFGILLVMALVSSVGALY) traverse the membrane as a helical segment. Topologically, residues 298-324 (WNGSQGGKNWYIKKMDATSDNFGYNLL) are exoplasmic loop. A helical membrane pass occupies residues 325 to 345 (TFIILYNNLIPISLLVTLEVV). The Cytoplasmic segment spans residues 346-847 (KYTQALFINW…CILYCFYKNV (502 aa)). The active-site 4-aspartylphosphate intermediate is the Asp388. Residues Asp388, Lys389, Thr390, Glu488, Phe529, Lys552, Arg585, Thr665, Gly666, Asp667, Arg755, and Lys761 each coordinate ATP. Asp388 provides a ligand contact to Mg(2+). Thr390 is a binding site for Mg(2+). Asp781 is a binding site for Mg(2+). 2 residues coordinate ATP: Asn784 and Asp785. Residue Asp785 coordinates Mg(2+). Residues 848–868 (VLYIIELWFAFVNGFSGQILF) form a helical membrane-spanning segment. Topologically, residues 869-870 (ER) are exoplasmic loop. A helical transmembrane segment spans residues 871-891 (WCIGLYNVIFTALPPFTLGIF). Topologically, residues 892-919 (ERSCSQESMLRFPQLYKITQNAEGFNTK) are cytoplasmic. Residues 920-940 (VFWGHCINALVHSLILFWFPM) traverse the membrane as a helical segment. Residues 941–957 (KALEHDTVLANGHATDY) lie on the Exoplasmic loop side of the membrane. Residues 958–978 (LFVGNIVYTYVVVTVCLKAGL) form a helical membrane-spanning segment. The Cytoplasmic portion of the chain corresponds to 979 to 988 (ETTAWTKFSH). The chain crosses the membrane as a helical span at residues 989-1009 (LAVWGSMLIWLVFFGIYSTIW). The Exoplasmic loop segment spans residues 1010 to 1023 (PTIPIAPDMKGQAT). Residues 1024–1044 (MVLSSAHFWLGLFLVPTACLI) form a helical membrane-spanning segment. The Cytoplasmic portion of the chain corresponds to 1045–1148 (EDVAWRAAKH…DTTKQKSRKK (104 aa)). Residues 1102-1126 (PPTLFRGSSLQQSMPHGYAFSQEEH) are disordered.

The protein belongs to the cation transport ATPase (P-type) (TC 3.A.3) family. Type IV subfamily. As to quaternary structure, component of a P4-ATPase flippase complex which consists of a catalytic alpha subunit and an accessory beta subunit. Interacts with TMEM30A to form a flippase complex. Mg(2+) serves as cofactor. In terms of tissue distribution, expressed in retinal photoreceptor cells and testis.

Its subcellular location is the membrane. It localises to the golgi apparatus membrane. The protein localises to the endosome membrane. The protein resides in the cell membrane. It is found in the photoreceptor outer segment membrane. Its subcellular location is the photoreceptor inner segment membrane. The enzyme catalyses ATP + H2O + phospholipidSide 1 = ADP + phosphate + phospholipidSide 2.. It catalyses the reaction a 1,2-diacyl-sn-glycero-3-phospho-L-serine(out) + ATP + H2O = a 1,2-diacyl-sn-glycero-3-phospho-L-serine(in) + ADP + phosphate + H(+). It carries out the reaction a 1,2-diacyl-sn-glycero-3-phosphoethanolamine(in) + ATP + H2O = a 1,2-diacyl-sn-glycero-3-phosphoethanolamine(out) + ADP + phosphate + H(+). ATPase activity is stimulated by phosphatidylserine (PS) and minimally by phosphatidylethanolamine (PE). ATPase activity is inhibited by N-ethylmaleimide (NEM) and vanadate. Flippase activity is inhibited by NEM and 1,2-dioleoyl-sn-glycero-3-phospho-L-serine (DOPS). Functionally, catalytic component of a P4-ATPase flippase complex which catalyzes the hydrolysis of ATP coupled to the transport of aminophospholipids from the outer to the inner leaflet of various membranes and ensures the maintenance of asymmetric distribution of phospholipids. Able to translocate phosphatidylserine, but not phosphatidylcholine. Phospholipid translocation seems also to be implicated in vesicle formation and in uptake of lipid signaling molecules. Reconstituted to liposomes, the ATP8A2:TMEM30A flippase complex predominantly transports phosphatidylserine (PS) and to a lesser extent phosphatidylethanolamine (PE). Phospholipid translocation is not associated with a countertransport of an inorganic ion or other charged substrate from the cytoplasmic side toward the exoplasm in connection with the phosphorylation from ATP. ATP8A2:TMEM30A may be involved in regulation of neurite outgrowth. Proposed to function in the generation and maintenance of phospholipid asymmetry in photoreceptor disk membranes and neuronal axon membranes. May be involved in vesicle trafficking in neuronal cells. Required for normal visual and auditory function; involved in photoreceptor and inner ear spiral ganglion cell survival. In Bos taurus (Bovine), this protein is Phospholipid-transporting ATPase IB.